The chain runs to 2135 residues: Nonribosomal peptide synthetase gliP (2135 aa).

An adenylation 1 region spans residues 34 to 424 (TYTELDVASS…LPADVEEPLR (391 aa)). Residues 519–594 (TEREQVIAEC…GILPYARDLA (76 aa)) enclose the Carrier 1 domain. S555 carries the post-translational modification O-(pantetheine 4'-phosphoryl)serine. A condensation 1 region spans residues 663–913 (AEHICNAWRQ…MATLPLVCRI (251 aa)). Positions 1078-1458 (YRELDQKSNA…YQEEPRLTQA (381 aa)) are adenylation 2. One can recognise a Carrier 2 domain in the interval 1544–1622 (ASIADGIATL…EQVELVRRKR (79 aa)). The residue at position 1582 (S1582) is an O-(pantetheine 4'-phosphoryl)serine. Positions 1642–1905 (SPLERQTWFQ…FLDRLPLRFK (264 aa)) are condensation 2. In terms of domain architecture, Carrier 3 spans 2061 to 2134 (RRLVGILQRE…DLAQRLYRQV (74 aa)). S2095 carries the post-translational modification O-(pantetheine 4'-phosphoryl)serine.

This sequence belongs to the NRP synthetase family.

Its pathway is mycotoxin biosynthesis. Nonribosomal peptide synthetase; part of the gene cluster that mediates the biosynthesis of gliotoxin, a member of the epipolythiodioxopiperazine (ETP) class of toxins characterized by a disulfide-bridged cyclic dipeptide. The first step in gliotoxin biosynthesis is the condensation of serine and phenylalanine to form the cyclo-L-phenylalanyl-L-serine diketopiperazine (DKP) by the NRPS gliP. GliP is also able to produce the DKP cyclo-L-tryptophanyl-L-serine, suggesting that the substrate specificity of the first adenylation (A) domain in gliP is sufficiently relaxed to accommodate both L-Phe and L-Trp. The cytochrome P450 monooxygenase gliC has been shown to catalyze the subsequent hydroxylation of the alpha-carbon of L-Phe in cyclo-L-phenylalanyl-L-serine whereas the second cytochrome P450 enzyme, gliF, is presumably involved in the modification of the DKP side chain. The glutathione S-transferase (GST) gliG then forms a bis-glutathionylated biosynthetic intermediate which is responsible for the sulfurization of gliotoxin. This bis-glutathionylated intermediate is subsequently processed by the gamma-glutamyl cyclotransferase gliK to remove both gamma-glutamyl moieties. Subsequent processing via gliI yields a biosynthetic intermediate, which is N-methylated via the N-methyltransferase gliN, before the gliotoxin oxidoreductase gliT-mediated disulfide bridge closure. GliN-mediated amide methylation confers stability to ETP, damping the spontaneous formation of tri- and tetrasulfides. Intracellular dithiol gliotoxin oxidized by gliT is subsequently effluxed by gliA. Gliotoxin contributes to pathogenesis during invasive aspergillosis. In macrophages and neutrophils, gliotoxin showed inhibition of various different cell functions including cytokine production, antigen presentation, phagocytosis, and production of reactive oxygen species. The chain is Nonribosomal peptide synthetase gliP from Aspergillus fumigatus (strain ATCC MYA-4609 / CBS 101355 / FGSC A1100 / Af293) (Neosartorya fumigata).